Reading from the N-terminus, the 358-residue chain is C-X-C chemokine receptor type 2 (358 aa).

The Extracellular segment spans residues 1-46 (MQEFTWENYSYEDFFGDFSNYSYSTDLPPTLLDSAPCRSESLETNS). Asparagine 8 and asparagine 20 each carry an N-linked (GlcNAc...) asparagine glycan. Residues 47–73 (YVVLITYILVFLLSLLGNSLVMLVILY) form a helical membrane-spanning segment. The Cytoplasmic portion of the chain corresponds to 74 to 82 (SRSTCSVTD). A helical membrane pass occupies residues 83–103 (VYLLNLAIADLLFATTLPIWA). Over 104–118 (ASKVHGWTFGTPLCK) the chain is Extracellular. A disulfide bridge links cysteine 117 with cysteine 194. A helical membrane pass occupies residues 119–140 (VVSLVKEVNFYSGILLLACISV). Residues 141-161 (DRYLAIVHATRTMIQKRHLVK) are Cytoplasmic-facing. Residues 162-181 (FICLSMWGVSLILSLPILLF) form a helical membrane-spanning segment. Residues 182 to 206 (RNAIFPPNSSPVCYEDMGNSTAKWR) are Extracellular-facing. The chain crosses the membrane as a helical span at residues 207-229 (MVLRILPQTFGFILPLLVMLFCY). Residues 230–249 (VFTLRTLFQAHMGQKHRAMR) lie on the Cytoplasmic side of the membrane. The helical transmembrane segment at 250-271 (VIFAVVLIFLLCWLPYNLVLLT) threads the bilayer. The Extracellular segment spans residues 272–292 (DTLMRTHVIQETCERRNDIDR). The helical transmembrane segment at 293–313 (ALDATEILGFLHSCLNPIIYA) threads the bilayer. At 314-358 (FIGQKFRYGLLKILAAHGLISKEFLAKESRPSFVASSSGNTSTTL) the chain is on the cytoplasmic side.

This sequence belongs to the G-protein coupled receptor 1 family. Interacts with IL8. Interacts with GNAI2. Post-translationally, phosphorylated upon ligand binding; which is required for desensitization. Expressed preferentially in neutrophils.

It is found in the cell membrane. Its function is as follows. Receptor for interleukin-8 which is a powerful neutrophil chemotactic factor. Binding of IL-8 to the receptor causes activation of neutrophils. This response is mediated via a G-protein that activates a phosphatidylinositol-calcium second messenger system. Binds to IL-8 with high affinity. Also binds with high affinity to CXCL3, GRO/MGSA and NAP-2. The sequence is that of C-X-C chemokine receptor type 2 (CXCR2) from Oryctolagus cuniculus (Rabbit).